The chain runs to 53 residues: UPF0391 membrane protein azo1750 (53 aa).

The next 2 helical transmembrane spans lie at 6–26 (VIFL…IAAG) and 30–50 (IAKI…VLGM).

It belongs to the UPF0391 family.

Its subcellular location is the cell membrane. The protein is UPF0391 membrane protein azo1750 of Azoarcus sp. (strain BH72).